The chain runs to 63 residues: Large ribosomal subunit protein uL30 (63 aa).

It belongs to the universal ribosomal protein uL30 family. As to quaternary structure, part of the 50S ribosomal subunit.

The protein is Large ribosomal subunit protein uL30 of Xylella fastidiosa (strain M23).